Consider the following 351-residue polypeptide: Glycerol-1-phosphate dehydrogenase [NAD(P)+] (351 aa).

Residues glycine 97 to aspartate 101 and threonine 119 to serine 122 each bind NAD(+). Residue aspartate 124 coordinates substrate. Serine 128 is an NAD(+) binding site. Substrate is bound at residue aspartate 171. 2 residues coordinate Zn(2+): aspartate 171 and histidine 251. Residue histidine 255 coordinates substrate. A Zn(2+)-binding site is contributed by histidine 267.

This sequence belongs to the glycerol-1-phosphate dehydrogenase family. Homodimer. Zn(2+) is required as a cofactor.

It is found in the cytoplasm. The enzyme catalyses sn-glycerol 1-phosphate + NAD(+) = dihydroxyacetone phosphate + NADH + H(+). It carries out the reaction sn-glycerol 1-phosphate + NADP(+) = dihydroxyacetone phosphate + NADPH + H(+). It functions in the pathway membrane lipid metabolism; glycerophospholipid metabolism. Its function is as follows. Catalyzes the NAD(P)H-dependent reduction of dihydroxyacetonephosphate (DHAP or glycerone phosphate) to glycerol 1-phosphate (G1P). The G1P thus generated is used as the glycerophosphate backbone of phospholipids in the cellular membranes of Archaea. In Saccharolobus islandicus (strain M.16.27) (Sulfolobus islandicus), this protein is Glycerol-1-phosphate dehydrogenase [NAD(P)+].